The following is a 449-amino-acid chain: MFEGIGGETLWRKEKQRPVKELIDFHMDWLHKKNEHDEWLSDRDGELYIRVFFPFFWKNFIHDKIFLSAGSLAFQSLLSLVPLLSVTLSILRVFPVFESLNRYLEDYVLQNFIPGTGTMLREYLNAFIDKTSSVPLLGVVFLFIIALSLISTIDHTLNEIWEVYAPRKIVQGFTLYWTVLTLGPVLIGSSLVASSFVWYTVFTEGPLLELKTRLLSFLPFLNSVIAFFLLYMLVPNRRVRFYHAVYGSLLAAVLFELSKKWFVFYVSHFATFEYIYGALSVIPMLFFWIYLEWVVVLTGAEFVFCLGSLKPKKSISEPFDPMRGIDEILVVLGWIWEGQKTGTPLSMKSIMKKKRALQPSRARSIVDLLLQAGIVHGTANAGFAVSSDLYETTLFDLYTKIPGGFGANESETRGNGGAILPESIGHNVTAGIKSAMTIPLATVLQDKIY.

Transmembrane regions (helical) follow at residues 77 to 97 (LLSL…FPVF), 133 to 153 (SVPL…ISTI), 173 to 193 (FTLY…SLVA), 214 to 234 (LLSF…YMLV), 244 to 264 (AVYG…WFVF), and 277 to 297 (GALS…VVVL).

The protein belongs to the UPF0761 family.

Its subcellular location is the cell inner membrane. The chain is UPF0761 membrane protein Cpha266_1653 from Chlorobium phaeobacteroides (strain DSM 266 / SMG 266 / 2430).